Consider the following 293-residue polypeptide: Putative metal ABC transporter substrate-binding protein Hpf (293 aa).

Residues 1 to 22 (MRNSFKIMTALALGLFAMQANA) form the signal peptide. The interaction with host components stretch occupies residues 23–48 (KFKVVTTFTVIQDIAQNVAGNAATVE). Positions 58, 123, 189, and 264 each coordinate a divalent metal cation.

Belongs to the bacterial solute-binding protein 9 family. In terms of assembly, interacts with host laminin and vitronectin. Can interact with both immobilized and soluble vitronectin.

It is found in the cell outer membrane. Its subcellular location is the cell surface. The protein localises to the periplasm. In terms of biological role, part of an ATP-binding cassette (ABC) transport system involved in metal import. Binds a metal with high affinity and specificity and delivers it to the membrane permease for translocation into the cytoplasm. Acts as an adhesin that promotes binding of H.influenzae to host laminin and vitronectin. In addition, interaction with serum vitronectin plays an important role in bacterial serum resistance. This chain is Putative metal ABC transporter substrate-binding protein Hpf (hpf), found in Haemophilus influenzae (strain NTHi 3655).